The chain runs to 245 residues: uncharacterized protein (245 aa).

The signal sequence occupies residues 1 to 27; it reads MKLKKRVSMFLVALTMCGGLFVTPAKA.

This is an uncharacterized protein from Bacillus subtilis (strain 168).